Reading from the N-terminus, the 477-residue chain is Glycogen synthase (477 aa).

Lys15 is an ADP-alpha-D-glucose binding site.

It belongs to the glycosyltransferase 1 family. Bacterial/plant glycogen synthase subfamily.

The enzyme catalyses [(1-&gt;4)-alpha-D-glucosyl](n) + ADP-alpha-D-glucose = [(1-&gt;4)-alpha-D-glucosyl](n+1) + ADP + H(+). The protein operates within glycan biosynthesis; glycogen biosynthesis. Its function is as follows. Synthesizes alpha-1,4-glucan chains using ADP-glucose. This Streptococcus pneumoniae serotype 2 (strain D39 / NCTC 7466) protein is Glycogen synthase.